Consider the following 576-residue polypeptide: Low-affinity glucose transporter HXT4 (576 aa).

Positions 1–56 (MSEEAAYQEDTAVQNTPADALSPVESDSNSALSTPSNKAERDDMKDFDENHEESNN) are disordered. The Cytoplasmic portion of the chain corresponds to 1–66 (MSEEAAYQED…YVEIPKKPAS (66 aa)). Residues 25–37 (ESDSNSALSTPSN) are compositionally biased toward polar residues. Residues 38 to 54 (KAERDDMKDFDENHEES) are compositionally biased toward basic and acidic residues. Lys45 is covalently cross-linked (Glycyl lysine isopeptide (Lys-Gly) (interchain with G-Cter in ubiquitin)). Residues 67 to 87 (AYVTVSICCLMVAFGGFVFGW) form a helical membrane-spanning segment. Residues 88 to 122 (DTGTISGFVAQTDFIRRFGMKHHDGTYYLSKVRTG) are Extracellular-facing. A helical membrane pass occupies residues 123–143 (LMVSIINIGCAIGGIILAKLG). Over 144-149 (DMYGRK) the chain is Cytoplasmic. Residues 150–170 (MGLIVVVVIYIIGIIIQIASI) traverse the membrane as a helical segment. Residues 171-180 (NKWYQYFIGR) are Extracellular-facing. The helical transmembrane segment at 181–201 (IISGLGVGGIAVLSPMLISEV) threads the bilayer. The Cytoplasmic segment spans residues 202–207 (SPKHIR). A helical transmembrane segment spans residues 208–228 (GTLVSCYQLMITLGIFLGYCT). At 229–242 (NYGTKTYTNSVQWR) the chain is on the extracellular side. A helical transmembrane segment spans residues 243–263 (VPLGLGFAWALFMIGGMTFVP). The Cytoplasmic segment spans residues 264-346 (ESPRYLVEVG…IQSLQQLTGD (83 aa)). The chain crosses the membrane as a helical span at residues 347-363 (NYFFYYGTTVFTAVGLS). At 364-369 (DSFETS) the chain is on the extracellular side. Residues 370-387 (IVLGIVNFASTFVGIFLV) form a helical membrane-spanning segment. The Cytoplasmic portion of the chain corresponds to 388–394 (ERYGRRR). The chain crosses the membrane as a helical span at residues 395–415 (CLLWGAASMTACMVVFASVGV). The Extracellular segment spans residues 416-437 (TRLWPNGKKNGSSKGAGNCMIV). Asn425 is a glycosylation site (N-linked (GlcNAc...) asparagine). The helical transmembrane segment at 438–458 (FTCFYLFCFATTWAPIPFVVN) threads the bilayer. At 459-475 (SETFPLRVKSKCMAIAQ) the chain is on the cytoplasmic side. A helical membrane pass occupies residues 476 to 496 (ACNWIWGFLIGFFTPFISNAI). Residue Asp497 is a topological domain, extracellular. Residues 498–518 (FYYGYVFMGCLVFSYFYVFFF) traverse the membrane as a helical segment. Residues 519 to 576 (VPETKGLTLEEVNTLWEEGVLPWKSPSWVPPNKRGTDYNADDLMHDDQPFYKKMFGKK) are Cytoplasmic-facing.

The protein belongs to the major facilitator superfamily. Sugar transporter (TC 2.A.1.1) family.

Its subcellular location is the cell membrane. Its activity is regulated as follows. Xylose uptake is strongly inhibited by glucose. Functionally, low-affinity glucose transporter. Can also transport xylose. This is Low-affinity glucose transporter HXT4 (HXT4) from Saccharomyces cerevisiae (strain JAY291) (Baker's yeast).